Reading from the N-terminus, the 404-residue chain is Cysteine desulfurase IscS (404 aa).

Pyridoxal 5'-phosphate is bound by residues Ala-75 to Thr-76, Asn-155, Gln-183, and Ser-203 to His-205. Position 206 is an N6-(pyridoxal phosphate)lysine (Lys-206). Residue Thr-243 coordinates pyridoxal 5'-phosphate. The Cysteine persulfide intermediate role is filled by Cys-328. Cys-328 serves as a coordination point for [2Fe-2S] cluster.

This sequence belongs to the class-V pyridoxal-phosphate-dependent aminotransferase family. NifS/IscS subfamily. In terms of assembly, homodimer. Forms a heterotetramer with IscU, interacts with other sulfur acceptors. The cofactor is pyridoxal 5'-phosphate.

The protein localises to the cytoplasm. The enzyme catalyses (sulfur carrier)-H + L-cysteine = (sulfur carrier)-SH + L-alanine. The protein operates within cofactor biosynthesis; iron-sulfur cluster biosynthesis. In terms of biological role, master enzyme that delivers sulfur to a number of partners involved in Fe-S cluster assembly, tRNA modification or cofactor biosynthesis. Catalyzes the removal of elemental sulfur atoms from cysteine to produce alanine. Functions as a sulfur delivery protein for Fe-S cluster synthesis onto IscU, an Fe-S scaffold assembly protein, as well as other S acceptor proteins. The chain is Cysteine desulfurase IscS from Vibrio atlanticus (strain LGP32) (Vibrio splendidus (strain Mel32)).